A 256-amino-acid chain; its full sequence is Ras-related protein Rab-26 (256 aa).

Positions 1 to 51 are disordered; the sequence is MSRKKTPKSKGASTPAASTLPTANGARPARSGTALSGPDAPPNGPLQPGRP. Over residues 12–23 the composition is skewed to low complexity; the sequence is ASTPAASTLPTA. GTP contacts are provided by Ser-72, Gly-73, Val-74, Gly-75, Lys-76, Thr-77, Cys-78, Ser-95, and Thr-96. Thr-77 serves as a coordination point for Mg(2+). 2 short sequence motifs (switch) span residues 86–101 and 119–136; these read GAFLAGTFISTVGIDF and DTAGQERFRSVTHAYYRD. Positions 96 and 119 each coordinate Mg(2+). Residues Gly-122, Asn-177, Lys-178, Asp-180, Ala-208, and Lys-209 each coordinate GTP. S-geranylgeranyl cysteine attachment occurs at residues Cys-253 and Cys-254.

The protein belongs to the small GTPase superfamily. Rab family. As to quaternary structure, interacts with RIMS1. Interacts with ADRA2B. Requires Mg(2+) as cofactor. Predominantly expressed in brain.

The protein resides in the golgi apparatus membrane. Its subcellular location is the cytoplasmic vesicle. It is found in the secretory vesicle membrane. It catalyses the reaction GTP + H2O = GDP + phosphate + H(+). Regulated by guanine nucleotide exchange factors (GEFs) which promote the exchange of bound GDP for free GTP. Regulated by GTPase activating proteins (GAPs) which increase the GTP hydrolysis activity. Inhibited by GDP dissociation inhibitors (GDIs). In terms of biological role, the small GTPases Rab are key regulators of intracellular membrane trafficking, from the formation of transport vesicles to their fusion with membranes. Rabs cycle between an inactive GDP-bound form and an active GTP-bound form that is able to recruit to membranes different set of downstream effectors directly responsible for vesicle formation, movement, tethering and fusion. RAB26 mediates transport of ADRA2A and ADRA2B from the Golgi to the cell membrane. Plays a role in the maturation of zymogenic granules and in pepsinogen secretion in the stomach. Plays a role in the secretion of amylase from acinar granules in the parotid gland. The protein is Ras-related protein Rab-26 of Homo sapiens (Human).